Here is a 548-residue protein sequence, read N- to C-terminus: Inosine-5'-monophosphate dehydrogenase (548 aa).

2 CBS domains span residues 121–201 (FILD…EDPV) and 205–261 (MSTE…PLAS). Residues 298 to 300 (DSS) and 348 to 350 (GMG) contribute to the NAD(+) site. Positions 350 and 352 each coordinate K(+). Ser-353 provides a ligand contact to IMP. Residue Cys-355 participates in K(+) binding. The active-site Thioimidate intermediate is the Cys-355. IMP contacts are provided by residues 388 to 390 (DGG) and 411 to 412 (GS). Arg-461 serves as the catalytic Proton acceptor. Gln-473 lines the IMP pocket. The interval 527-548 (ASAQTEGNVHGLHSHEKKLYSS) is disordered. Ser-528 contributes to the K(+) binding site. Residues 539-548 (HSHEKKLYSS) are compositionally biased toward basic and acidic residues.

The protein belongs to the IMPDH/GMPR family. In terms of assembly, homotetramer. K(+) serves as cofactor.

Its subcellular location is the cytoplasm. It carries out the reaction IMP + NAD(+) + H2O = XMP + NADH + H(+). It participates in purine metabolism; XMP biosynthesis via de novo pathway; XMP from IMP: step 1/1. Mycophenolic acid (MPA) is a non-competitive inhibitor that prevents formation of the closed enzyme conformation by binding to the same site as the amobile flap. In contrast, mizoribine monophosphate (MZP) is a competitive inhibitor that induces the closed conformation. MPA is a potent inhibitor of mammalian IMPDHs but a poor inhibitor of the bacterial enzymes. MZP is a more potent inhibitor of bacterial IMPDH. Catalyzes the conversion of inosine 5'-phosphate (IMP) to xanthosine 5'-phosphate (XMP), the first committed and rate-limiting step in the de novo synthesis of guanine nucleotides, and therefore plays an important role in the regulation of cell growth. Part of the gene cluster that mediates the biosynthesis of mycophenolic acid (MPA), the first isolated antibiotic natural product in the world. Does not play a role in the biosynthesis of MPA, but is involved in self resistance to MPA, since MPA acts as an inhibitor of IMP dehydrogenases. The sequence is that of Inosine-5'-monophosphate dehydrogenase from Penicillium brevicompactum.